Consider the following 40-residue polypeptide: Subtilisin-like serine protease AS-E1 (40 aa).

The 37-residue stretch at proline 4–tyrosine 40 folds into the Peptidase S8 domain. Catalysis depends on aspartate 36, which acts as the Charge relay system.

This sequence belongs to the peptidase S8 family. In terms of assembly, homodimer.

Its activity is regulated as follows. Strongly inhibited by antipain and PMSF. Inhibited by benzamidine and aprotinin by 80% and 17% respectively. Little or no inhibition by EDTA, E-64, iodoacetic acid, leupeptin and FUT-175. Its function is as follows. Subtilisin-like serine protease. Cleaves prothrombin at 155-Arg-|-Ser-156, 45-Thr-|-Ala-46 and 316-Tyr-|-Ile-317 to produce meizothrombin(desF1)-like molecules. Degrades fibrinogen. Inhibits plasma coagulation. This Acremonium sp protein is Subtilisin-like serine protease AS-E1.